The primary structure comprises 546 residues: Chaperonin GroEL (546 aa).

ATP contacts are provided by residues 30–33 (TLGP), K51, 87–91 (DGTTT), G415, 479–481 (NAA), and D495. The tract at residues 527–546 (DESAAPAMPGGMGGMGDMGM) is disordered. A compositionally biased stretch (gly residues) spans 536 to 546 (GGMGGMGDMGM).

It belongs to the chaperonin (HSP60) family. Forms a cylinder of 14 subunits composed of two heptameric rings stacked back-to-back. Interacts with the co-chaperonin GroES.

It localises to the cytoplasm. It carries out the reaction ATP + H2O + a folded polypeptide = ADP + phosphate + an unfolded polypeptide.. Its function is as follows. Together with its co-chaperonin GroES, plays an essential role in assisting protein folding. The GroEL-GroES system forms a nano-cage that allows encapsulation of the non-native substrate proteins and provides a physical environment optimized to promote and accelerate protein folding. This is Chaperonin GroEL from Acidovorax sp. (strain JS42).